The primary structure comprises 156 residues: Small ribosomal subunit protein uS7 (156 aa).

Belongs to the universal ribosomal protein uS7 family. As to quaternary structure, part of the 30S ribosomal subunit. Contacts proteins S9 and S11.

One of the primary rRNA binding proteins, it binds directly to 16S rRNA where it nucleates assembly of the head domain of the 30S subunit. Is located at the subunit interface close to the decoding center, probably blocks exit of the E-site tRNA. This is Small ribosomal subunit protein uS7 from Arthrospira platensis (Spirulina platensis).